The primary structure comprises 195 residues: uncharacterized protein (195 aa).

The 61-residue stretch at 6 to 66 folds into the HTH tetR-type domain; the sequence is VESRKRLLKA…ELITDFHSRV (61 aa). Positions 29–48 form a DNA-binding region, H-T-H motif; sequence KVSEIVKKAGFTQPSFYLYF.

This is an uncharacterized protein from Bacillus subtilis (strain 168).